Here is a 267-residue protein sequence, read N- to C-terminus: EFGGSAVRSLPVEARLTLCNLAVEFSAFSGIVAPDDTVFEYLAGRPYAPAGAQWEPALWHWRSLYSDADAVFDRELSVDCRQLAPMVTWGTSPQHGVAVDGAVPNPAMAIDADTRQAMERALSYMDLRPGQRMADIAIDAAFIGSCTNSRLSDLRSAAGVLAGRKVAPGVTAICVPVSSAVKRAAEAEGLDRVFREAGFEWRESGCSMCFYAGGESFGHRQRVISSTNRNFESRQGPQTRTHLAGPATVAASAVLGRIADPRRPPGA.

3 residues coordinate [4Fe-4S] cluster: Cys146, Cys206, and Cys209.

It belongs to the aconitase/IPM isomerase family. LeuC type 1 subfamily. As to quaternary structure, heterodimer of LeuC and LeuD. Requires [4Fe-4S] cluster as cofactor.

The catalysed reaction is (2R,3S)-3-isopropylmalate = (2S)-2-isopropylmalate. It participates in amino-acid biosynthesis; L-leucine biosynthesis; L-leucine from 3-methyl-2-oxobutanoate: step 2/4. Catalyzes the isomerization between 2-isopropylmalate and 3-isopropylmalate, via the formation of 2-isopropylmaleate. In Cupriavidus necator (Alcaligenes eutrophus), this protein is 3-isopropylmalate dehydratase large subunit (leuC).